The following is a 547-amino-acid chain: 2-succinyl-5-enolpyruvyl-6-hydroxy-3-cyclohexene-1-carboxylate synthase (547 aa).

Belongs to the TPP enzyme family. MenD subfamily. In terms of assembly, homodimer. Mg(2+) serves as cofactor. Requires Mn(2+) as cofactor. It depends on thiamine diphosphate as a cofactor.

The enzyme catalyses isochorismate + 2-oxoglutarate + H(+) = 5-enolpyruvoyl-6-hydroxy-2-succinyl-cyclohex-3-ene-1-carboxylate + CO2. It functions in the pathway quinol/quinone metabolism; 1,4-dihydroxy-2-naphthoate biosynthesis; 1,4-dihydroxy-2-naphthoate from chorismate: step 2/7. It participates in quinol/quinone metabolism; menaquinone biosynthesis. In terms of biological role, catalyzes the thiamine diphosphate-dependent decarboxylation of 2-oxoglutarate and the subsequent addition of the resulting succinic semialdehyde-thiamine pyrophosphate anion to isochorismate to yield 2-succinyl-5-enolpyruvyl-6-hydroxy-3-cyclohexene-1-carboxylate (SEPHCHC). In Mycobacterium sp. (strain JLS), this protein is 2-succinyl-5-enolpyruvyl-6-hydroxy-3-cyclohexene-1-carboxylate synthase.